A 305-amino-acid polypeptide reads, in one-letter code: Protoheme IX farnesyltransferase 2 (305 aa).

8 consecutive transmembrane segments (helical) span residues 38–58 (LITT…SFLG), 60–80 (INTV…SCAI), 115–135 (ILLV…AAVI), 157–177 (INTV…WTAV), 181–201 (IGVV…PHFL), 227–247 (VTKR…FFLG), 249–269 (LGLP…ILGL), and 285–305 (FVYS…LTLF).

This sequence belongs to the UbiA prenyltransferase family. Protoheme IX farnesyltransferase subfamily. As to quaternary structure, interacts with CtaA.

It is found in the cell membrane. The catalysed reaction is heme b + (2E,6E)-farnesyl diphosphate + H2O = Fe(II)-heme o + diphosphate. The protein operates within porphyrin-containing compound metabolism; heme O biosynthesis; heme O from protoheme: step 1/1. Functionally, converts heme B (protoheme IX) to heme O by substitution of the vinyl group on carbon 2 of heme B porphyrin ring with a hydroxyethyl farnesyl side group. In Bacillus subtilis (strain 168), this protein is Protoheme IX farnesyltransferase 2 (ctaB2).